Here is a 520-residue protein sequence, read N- to C-terminus: GMP synthase [glutamine-hydrolyzing] (520 aa).

The Glutamine amidotransferase type-1 domain occupies 9 to 202 (HVLIVDFGSQ…THKIAGLKGD (194 aa)). The active-site Nucleophile is the cysteine 86. Residues histidine 176 and glutamate 178 contribute to the active site. A GMPS ATP-PPase domain is found at 203–395 (WTMKAFREEA…LGLPPQFVGR (193 aa)). 230-236 (SGGVDSS) is an ATP binding site.

Homodimer.

It carries out the reaction XMP + L-glutamine + ATP + H2O = GMP + L-glutamate + AMP + diphosphate + 2 H(+). Its pathway is purine metabolism; GMP biosynthesis; GMP from XMP (L-Gln route): step 1/1. In terms of biological role, catalyzes the synthesis of GMP from XMP. The chain is GMP synthase [glutamine-hydrolyzing] from Phenylobacterium zucineum (strain HLK1).